The chain runs to 70 residues: Large ribosomal subunit protein bL31 (70 aa).

Zn(2+) is bound by residues Cys-16, Cys-18, Cys-37, and Cys-40.

This sequence belongs to the bacterial ribosomal protein bL31 family. Type A subfamily. In terms of assembly, part of the 50S ribosomal subunit. It depends on Zn(2+) as a cofactor.

Its function is as follows. Binds the 23S rRNA. The sequence is that of Large ribosomal subunit protein bL31 from Shewanella sediminis (strain HAW-EB3).